Here is a 390-residue protein sequence, read N- to C-terminus: 5-hydroxytryptamine receptor 1B (390 aa).

Topologically, residues 1 to 46 (MEEPGAQCAPPXPAGSETWVPQANLSSAPSQNCSAKDYIYQDSIAL) are extracellular. 2 N-linked (GlcNAc...) asparagine glycosylation sites follow: N24 and N32. A helical membrane pass occupies residues 47-72 (PWKVLLVMLLALITLATTLSNAFVIA). Topologically, residues 73-86 (TVYRTRKLHTPANY) are cytoplasmic. A helical transmembrane segment spans residues 87–111 (LIASLAVTDLLVSILVMPISTMYTV). The Extracellular segment spans residues 112–119 (TGRWTLGQ). A helical transmembrane segment spans residues 120–145 (VVCDFWLSSDITCCTASILHLCVIAL). An intrachain disulfide couples C122 to C199. Residues D129 and T134 each coordinate ergotamine. Residues 146-148 (DRY) carry the DRY motif; important for ligand-induced conformation changes and signaling motif. At 146 to 165 (DRYWAITDAVEYSAKRTPKR) the chain is on the cytoplasmic side. A helical transmembrane segment spans residues 166–184 (AAVMIALVWVFSISISLPP). Residues 185–205 (FFWRQAKAEEEVSECVVNTDH) are Extracellular-facing. V201 is an ergotamine binding site. The helical transmembrane segment at 206–229 (ILYTVYSTVGAFYFPTLLLIALYG) threads the bilayer. Residues 230–315 (RIYVEARSRI…AARERKATKT (86 aa)) are Cytoplasmic-facing. The span at 259-272 (DSPGSTSSVTSINS) shows a compositional bias: polar residues. The interval 259-281 (DSPGSTSSVTSINSRVPDVPSES) is disordered. A helical transmembrane segment spans residues 316–337 (LGIILGAFIVCWLPFFIISLVM). The Extracellular portion of the chain corresponds to 338–347 (PICKDACWFH). The chain crosses the membrane as a helical span at residues 348-370 (LAIFDFFTWLGYLNSLINPIIYT). The NPxxY motif; important for ligand-induced conformation changes and signaling signature appears at 365 to 369 (NPIIY). Over 371–390 (MSNEDFKQAFHKLIRFKCTS) the chain is Cytoplasmic. C388 is lipidated: S-palmitoyl cysteine.

The protein belongs to the G-protein coupled receptor 1 family. As to quaternary structure, homodimer. Heterodimer with HTR1D. In terms of processing, phosphorylated. Desensitization of the receptor may be mediated by its phosphorylation. Post-translationally, palmitoylated.

Its subcellular location is the cell membrane. Functionally, G-protein coupled receptor for 5-hydroxytryptamine (serotonin). Also functions as a receptor for ergot alkaloid derivatives, various anxiolytic and antidepressant drugs and other psychoactive substances, such as lysergic acid diethylamide (LSD). Ligand binding causes a conformation change that triggers signaling via guanine nucleotide-binding proteins (G proteins) and modulates the activity of downstream effectors, such as adenylate cyclase. HTR1B is coupled to G(i)/G(o) G alpha proteins and mediates inhibitory neurotransmission by inhibiting adenylate cyclase activity. Arrestin family members inhibit signaling via G proteins and mediate activation of alternative signaling pathways. Regulates the release of 5-hydroxytryptamine, dopamine and acetylcholine in the brain, and thereby affects neural activity, nociceptive processing, pain perception, mood and behavior. Besides, plays a role in vasoconstriction of cerebral arteries. This chain is 5-hydroxytryptamine receptor 1B (HTR1B), found in Gorilla gorilla gorilla (Western lowland gorilla).